The primary structure comprises 664 residues: UvrABC system protein B (664 aa).

The Helicase ATP-binding domain occupies 23–180; it reads EGLNRGMRFQ…ERLARIGYQR (158 aa). 36-43 contacts ATP; it reads GVTGSGKT. Positions 89–112 match the Beta-hairpin motif; the sequence is YYDYYQPEAYIPTKDLYIEKNADI. A Helicase C-terminal domain is found at 429–588; that stretch reads DLVNEIVKVK…ITPRSVIKPL (160 aa). Positions 622–657 constitute a UVR domain; it reads EEYMAVLEEEMYRAASELRYEDAAALRDELFRIREE.

The protein belongs to the UvrB family. In terms of assembly, forms a heterotetramer with UvrA during the search for lesions. Interacts with UvrC in an incision complex.

It localises to the cytoplasm. In terms of biological role, the UvrABC repair system catalyzes the recognition and processing of DNA lesions. A damage recognition complex composed of 2 UvrA and 2 UvrB subunits scans DNA for abnormalities. Upon binding of the UvrA(2)B(2) complex to a putative damaged site, the DNA wraps around one UvrB monomer. DNA wrap is dependent on ATP binding by UvrB and probably causes local melting of the DNA helix, facilitating insertion of UvrB beta-hairpin between the DNA strands. Then UvrB probes one DNA strand for the presence of a lesion. If a lesion is found the UvrA subunits dissociate and the UvrB-DNA preincision complex is formed. This complex is subsequently bound by UvrC and the second UvrB is released. If no lesion is found, the DNA wraps around the other UvrB subunit that will check the other stand for damage. This chain is UvrABC system protein B, found in Thermotoga petrophila (strain ATCC BAA-488 / DSM 13995 / JCM 10881 / RKU-1).